The sequence spans 470 residues: AAA-ATPase At5g17730 (470 aa).

Positions 1–18 (MFSLRNLPSLAPFVSAYA) are cleaved as a signal peptide. Position 252–259 (252–259 (GPPGTGKT)) interacts with ATP.

Belongs to the AAA ATPase family. BCS1 subfamily. Requires Mg(2+) as cofactor.

It carries out the reaction ATP + H2O = ADP + phosphate + H(+). The chain is AAA-ATPase At5g17730 from Arabidopsis thaliana (Mouse-ear cress).